Here is a 211-residue protein sequence, read N- to C-terminus: MLTIALSKGRILDDTLPLLAEAGIVPTENPDKSRKLIIPTTQDDVRLLIVRATDVPTYVEHGAADLGVAGKDVLMEYGGQGLYEPLDLRIALCKLMTAGRVGDVEPKGRLRVATKFVNVAKRYYAEQGRQVDIIKLYGSMELAPLIGLADKIIDVVDTGNTLRANGLEPQDFIADISSRLIVNKASMKMQHARIQALIDTLRKAVESRHRG.

Belongs to the ATP phosphoribosyltransferase family. Short subfamily. As to quaternary structure, heteromultimer composed of HisG and HisZ subunits.

It localises to the cytoplasm. The enzyme catalyses 1-(5-phospho-beta-D-ribosyl)-ATP + diphosphate = 5-phospho-alpha-D-ribose 1-diphosphate + ATP. It functions in the pathway amino-acid biosynthesis; L-histidine biosynthesis; L-histidine from 5-phospho-alpha-D-ribose 1-diphosphate: step 1/9. Functionally, catalyzes the condensation of ATP and 5-phosphoribose 1-diphosphate to form N'-(5'-phosphoribosyl)-ATP (PR-ATP). Has a crucial role in the pathway because the rate of histidine biosynthesis seems to be controlled primarily by regulation of HisG enzymatic activity. This Pseudomonas fluorescens (strain SBW25) protein is ATP phosphoribosyltransferase.